The primary structure comprises 315 residues: Borealin (315 aa).

2 disordered regions span residues 103 to 126 (IEGH…GASG) and 138 to 226 (LRST…TPPM). Phosphothreonine is present on threonine 146. Serine 152 is modified (phosphoserine). Residues 153 to 162 (ARARRARRSR) are compositionally biased toward basic residues. At serine 163 the chain carries Phosphoserine. Residues 178–188 (SISSSSSSSRN) show a composition bias toward low complexity. Serine 205 is subject to Phosphoserine. Threonine 209 is modified (phosphothreonine). Residues serine 218, serine 220, and serine 244 each carry the phosphoserine modification.

Belongs to the borealin family. As to quaternary structure, component of the CPC complex. In terms of tissue distribution, ubiquitously expressed in the early embryo. Expression is restricted to the ventral nerve cord and brain during later embryonic stages.

Its subcellular location is the nucleus. The protein resides in the chromosome. The protein localises to the centromere. It is found in the cytoplasm. It localises to the cytoskeleton. Its subcellular location is the spindle. In terms of biological role, component of the chromosomal passenger complex (CPC), a complex that acts as a key regulator of embryonic mitosis. The CPC complex has essential functions at the centromere for ensuring sister chromatid cohesion, recruitment of the CPC to kinetochores, and chromosome alignment and segregation. There is no function in meiotic histone phosphorylation or spindle formation. The protein is Borealin (borr) of Drosophila melanogaster (Fruit fly).